The chain runs to 418 residues: Glutamyl-tRNA reductase (418 aa).

Residues 49 to 52 (TCNR), serine 109, 114 to 116 (EPQ), and glutamine 120 contribute to the substrate site. Cysteine 50 acts as the Nucleophile in catalysis. 189–194 (GAGETI) provides a ligand contact to NADP(+).

It belongs to the glutamyl-tRNA reductase family. In terms of assembly, homodimer.

It carries out the reaction (S)-4-amino-5-oxopentanoate + tRNA(Glu) + NADP(+) = L-glutamyl-tRNA(Glu) + NADPH + H(+). It functions in the pathway porphyrin-containing compound metabolism; protoporphyrin-IX biosynthesis; 5-aminolevulinate from L-glutamyl-tRNA(Glu): step 1/2. In terms of biological role, catalyzes the NADPH-dependent reduction of glutamyl-tRNA(Glu) to glutamate 1-semialdehyde (GSA). The protein is Glutamyl-tRNA reductase of Escherichia coli O6:K15:H31 (strain 536 / UPEC).